Here is a 522-residue protein sequence, read N- to C-terminus: Tetratricopeptide repeat and J domain-containing co-chaperone DNJ1 (522 aa).

Residues 1–22 (MKGFLLVALPVLFLSLSTQVFG) form the signal peptide. TPR repeat units lie at residues 29 to 62 (AAQI…DPTG), 63 to 96 (YANY…NPGF), 97 to 130 (VQAH…KSDS), 142 to 175 (GEAA…GPNS), 210 to 243 (TYLP…DPDS), 256 to 289 (LEKD…LVRF), and 356 to 389 (VDSW…SGRS). In terms of domain architecture, J spans 410–471 (DYYKVLGVPR…ELRQRYDNGD (62 aa)). The segment at 465–494 (QRYDNGDDPNDPTGGQQHNPFAHHGGGMPF) is disordered.

The protein resides in the endoplasmic reticulum lumen. In terms of biological role, endoplasmic reticulum co-chaperone crucial for survival and virulence factor production at elevated temperatures representative of febrile patients during infection. Contributes to virulence in a mouse model of cryptococcosis. With chaperone CNE1, coordinately maintains ER homeostasis and contributes to maintenance of cell wall architecture. The polypeptide is Tetratricopeptide repeat and J domain-containing co-chaperone DNJ1 (Cryptococcus neoformans var. grubii serotype A (strain H99 / ATCC 208821 / CBS 10515 / FGSC 9487) (Filobasidiella neoformans var. grubii)).